Reading from the N-terminus, the 246-residue chain is FAD synthetase (246 aa).

The protein belongs to the RibF family.

It catalyses the reaction FMN + ATP + H(+) = FAD + diphosphate. It functions in the pathway cofactor biosynthesis; FAD biosynthesis; FAD from FMN: step 1/1. Its function is as follows. Catalyzes the adenylation of flavin mononucleotide (FMN) to form flavin adenine dinucleotide (FAD) coenzyme. Can also catalyze, with lower efficiency, the adenylation of the toxic riboflavin analogs 8-demethyl-8-aminoriboflavin mononucleotide (AFMN) and roseoflavin mononucleotide (RoFMN) to 8-demethyl-8-aminoriboflavin adenine dinucleotide (AFAD) and roseoflavin adenine dinucleotide (RoFAD), respectively. The protein is FAD synthetase of Listeria monocytogenes serovar 1/2a (strain ATCC BAA-679 / EGD-e).